The following is a 221-amino-acid chain: Serine/arginine-rich splicing factor 2 (221 aa).

Position 2 is an N-acetylserine (Ser2). Ser2 carries the phosphoserine modification. Positions 14 to 92 (TSLKVDNLTY…RELRVQMARY (79 aa)) constitute an RRM domain. Thr22 and Thr25 each carry phosphothreonine. Ser26 bears the Phosphoserine mark. An N6-acetyllysine modification is found at Lys52. Residues 92–221 (YGRPPDSHHS…SPEEEGAVSS (130 aa)) are disordered. Basic residues-rich tracts occupy residues 117-171 (RRSR…RSKS) and 179-189 (SRSRSRSRSRS). Phosphoserine occurs at positions 189, 191, 204, 206, 208, 212, and 220. Positions 212-221 (SPEEEGAVSS) are enriched in acidic residues.

Belongs to the splicing factor SR family. In vitro, self-associates and binds SRSF1/SFRS1 (ASF/SF2), SNRP70 and U2AF1 but not U2AF2. Binds SREK1/SFRS12. Interacts with CCNL1 and CCNL2. Interacts with SCAF11. Interacts with ZRSR2/U2AF1-RS2. Interacts with CCDC55 (via C-terminus). Interacts with BRDT. In terms of processing, extensively phosphorylated on serine residues in the RS domain. Phosphorylated by SRPK2 and this causes its redistribution from the nuclear speckle to nucleoplasm and controls cell fate decision in response to cisplatin treatment. KAT5/TIP60 inhibits its phosphorylation by preventing SRPK2 nuclear translocation. Post-translationally, acetylation on Lys-52 by KAT5/TIP60 promotes its proteasomal degradation. This effect is counterbalanced by HDAC6, which positively controls SRSF2 protein level by deacetylating it and preventing its proteasomal degradation.

The protein resides in the nucleus. The protein localises to the nucleoplasm. Its subcellular location is the nucleus speckle. Its function is as follows. Necessary for the splicing of pre-mRNA. It is required for formation of the earliest ATP-dependent splicing complex and interacts with spliceosomal components bound to both the 5'- and 3'-splice sites during spliceosome assembly. It also is required for ATP-dependent interactions of both U1 and U2 snRNPs with pre-mRNA. Interacts with other spliceosomal components, via the RS domains, to form a bridge between the 5'- and 3'-splice site binding components, U1 snRNP and U2AF. Binds to purine-rich RNA sequences, either 5'-AGSAGAGTA-3' (S=C or G) or 5'-GTTCGAGTA-3'. Can bind to beta-globin mRNA and commit it to the splicing pathway. The phosphorylated form (by SRPK2) is required for cellular apoptosis in response to cisplatin treatment. This chain is Serine/arginine-rich splicing factor 2 (SRSF2), found in Pan troglodytes (Chimpanzee).